A 541-amino-acid polypeptide reads, in one-letter code: Formimidoyltransferase-cyclodeaminase (541 aa).

The tract at residues 1 to 181 (MAKLVECVPN…GATVTGARTF (181 aa)) is formiminotransferase N-subdomain. Catalysis depends on His82, which acts as the For formimidoyltransferase activity. 163–172 (GPPAFVPQWG) serves as a coordination point for folate. The segment at 182 to 326 (LIAYNINLLC…PRERIIEYLV (145 aa)) is formiminotransferase C-subdomain. Residues 327 to 334 (QAGQEDKG) are linker. Residues 335-541 (LVTKPLGAFV…VLALLEKREA (207 aa)) are cyclodeaminase/cyclohydrolase. Asp412 (for cyclodeaminase activity) is an active-site residue.

The protein in the C-terminal section; belongs to the cyclodeaminase/cyclohydrolase family. This sequence in the N-terminal section; belongs to the formiminotransferase family. Homooctamer, including four polyglutamate binding sites. The subunits are arranged as a tetramer of dimers, and form a planar ring-shaped structure.

It localises to the cytoplasm. The protein resides in the cytosol. It is found in the golgi apparatus. The protein localises to the cytoskeleton. Its subcellular location is the microtubule organizing center. It localises to the centrosome. The protein resides in the centriole. It carries out the reaction 5-formimidoyltetrahydrofolate + L-glutamate = N-formimidoyl-L-glutamate + (6S)-5,6,7,8-tetrahydrofolate. The catalysed reaction is 5-formimidoyltetrahydrofolate + 2 H(+) = (6R)-5,10-methenyltetrahydrofolate + NH4(+). Its pathway is amino-acid degradation; L-histidine degradation into L-glutamate; L-glutamate from N-formimidoyl-L-glutamate (transferase route): step 1/1. Folate-dependent enzyme, that displays both transferase and deaminase activity. Serves to channel one-carbon units from formiminoglutamate to the folate pool. Functionally, binds and promotes bundling of vimentin filaments originating from the Golgi. The protein is Formimidoyltransferase-cyclodeaminase (FTCD) of Gallus gallus (Chicken).